Consider the following 119-residue polypeptide: Non-specific lipid-transfer protein 3 (119 aa).

A signal peptide spans 1–24 (MARSMKLACVVLAMCMLVAPMAEA). Disulfide bonds link Cys-28/Cys-77, Cys-38/Cys-54, Cys-55/Cys-100, and Cys-75/Cys-114.

Belongs to the plant LTP family. In terms of tissue distribution, expressed in roots, stem, leaves and tendrils of the mature plant.

Plant non-specific lipid-transfer proteins transfer phospholipids as well as galactolipids across membranes. May play a role in wax or cutin deposition in the cell walls of expanding epidermal cells and certain secretory tissues. This chain is Non-specific lipid-transfer protein 3, found in Pisum sativum (Garden pea).